The following is a 525-amino-acid chain: GMP synthase [glutamine-hydrolyzing] (525 aa).

One can recognise a Glutamine amidotransferase type-1 domain in the interval arginine 9 to leucine 207. Cysteine 86 functions as the Nucleophile in the catalytic mechanism. Residues histidine 181 and glutamate 183 contribute to the active site. One can recognise a GMPS ATP-PPase domain in the interval tryptophan 208–arginine 400. An ATP-binding site is contributed by serine 235 to serine 241.

Homodimer.

It catalyses the reaction XMP + L-glutamine + ATP + H2O = GMP + L-glutamate + AMP + diphosphate + 2 H(+). The protein operates within purine metabolism; GMP biosynthesis; GMP from XMP (L-Gln route): step 1/1. Its function is as follows. Catalyzes the synthesis of GMP from XMP. The sequence is that of GMP synthase [glutamine-hydrolyzing] from Cronobacter sakazakii (strain ATCC BAA-894) (Enterobacter sakazakii).